A 502-amino-acid polypeptide reads, in one-letter code: Protein nucleotidyltransferase YdiU (502 aa).

8 residues coordinate ATP: Gly-98, Gly-100, Arg-101, Lys-121, Asp-133, Gly-134, Arg-184, and Arg-191. Residue Asp-260 is the Proton acceptor of the active site. Residues Asn-261 and Asp-270 each contribute to the Mg(2+) site. ATP is bound at residue Asp-270.

The protein belongs to the SELO family. Requires Mg(2+) as cofactor. Mn(2+) serves as cofactor.

It catalyses the reaction L-seryl-[protein] + ATP = 3-O-(5'-adenylyl)-L-seryl-[protein] + diphosphate. The enzyme catalyses L-threonyl-[protein] + ATP = 3-O-(5'-adenylyl)-L-threonyl-[protein] + diphosphate. It carries out the reaction L-tyrosyl-[protein] + ATP = O-(5'-adenylyl)-L-tyrosyl-[protein] + diphosphate. The catalysed reaction is L-histidyl-[protein] + UTP = N(tele)-(5'-uridylyl)-L-histidyl-[protein] + diphosphate. It catalyses the reaction L-seryl-[protein] + UTP = O-(5'-uridylyl)-L-seryl-[protein] + diphosphate. The enzyme catalyses L-tyrosyl-[protein] + UTP = O-(5'-uridylyl)-L-tyrosyl-[protein] + diphosphate. In terms of biological role, nucleotidyltransferase involved in the post-translational modification of proteins. It can catalyze the addition of adenosine monophosphate (AMP) or uridine monophosphate (UMP) to a protein, resulting in modifications known as AMPylation and UMPylation. This Rhizobium rhizogenes (strain K84 / ATCC BAA-868) (Agrobacterium radiobacter) protein is Protein nucleotidyltransferase YdiU.